A 334-amino-acid chain; its full sequence is Probable tRNA pseudouridine synthase B (334 aa).

The active-site Nucleophile is Asp82. The 76-residue stretch at 250–325 (LPKVWIRDSA…IAVDVDKVFM (76 aa)) folds into the PUA domain.

The protein belongs to the pseudouridine synthase TruB family. Type 2 subfamily.

The enzyme catalyses uridine(55) in tRNA = pseudouridine(55) in tRNA. In terms of biological role, could be responsible for synthesis of pseudouridine from uracil-55 in the psi GC loop of transfer RNAs. The chain is Probable tRNA pseudouridine synthase B from Thermococcus onnurineus (strain NA1).